Reading from the N-terminus, the 684-residue chain is Putative glucan endo-1,3-beta-glucosidase btgC (684 aa).

Residues 1 to 10 show a composition bias toward polar residues; it reads MAGVNRSFSY. Disordered regions lie at residues 1-38, 124-143, and 157-182; these read MAGV…LYST, AERD…APPD, and DSYS…TTPS. Topologically, residues 1–302 are cytoplasmic; the sequence is MAGVNRSFSY…HIIGGGSRKR (302 aa). Basic and acidic residues predominate over residues 12–32; sequence RGDDALLRDDEREISPLRSAE. The helical; Signal-anchor for type II membrane protein transmembrane segment at 303-323 threads the bilayer; sequence GWIVGLILAAVIVAAIVGGAV. At 324-684 the chain is on the extracellular side; sequence GGILGHQEHD…IPDCGGKTIT (361 aa). The tract at residues 330-358 is disordered; that stretch reads QEHDGDTSSSSSSSSSSGTGSGGSDKGDG. Low complexity predominate over residues 336–347; that stretch reads TSSSSSSSSSSG. 4 N-linked (GlcNAc...) asparagine glycosylation sites follow: N404, N427, N455, and N474. E487 serves as the catalytic Proton donor. The Nucleophile role is filled by E586. The N-linked (GlcNAc...) asparagine glycan is linked to N631.

It belongs to the glycosyl hydrolase 17 family.

Its subcellular location is the cell membrane. It carries out the reaction Hydrolysis of (1-&gt;3)-beta-D-glucosidic linkages in (1-&gt;3)-beta-D-glucans.. Functionally, glucanases play a role in cell expansion during growth, in cell-cell fusion during mating, and in spore release during sporulation. This enzyme may be involved in beta-glucan degradation. Active on laminarin and lichenan. This is Putative glucan endo-1,3-beta-glucosidase btgC (btgC) from Aspergillus niger (strain ATCC MYA-4892 / CBS 513.88 / FGSC A1513).